Reading from the N-terminus, the 944-residue chain is Protein translocase subunit SecA (944 aa).

ATP is bound by residues Gln-96, 114-118 (GEGKT), and Asp-554.

Belongs to the SecA family. As to quaternary structure, monomer and homodimer. Part of the essential Sec protein translocation apparatus which comprises SecA, SecYEG and auxiliary proteins SecDF. Other proteins may also be involved.

Its subcellular location is the cell inner membrane. The protein localises to the cytoplasm. It carries out the reaction ATP + H2O + cellular proteinSide 1 = ADP + phosphate + cellular proteinSide 2.. Functionally, part of the Sec protein translocase complex. Interacts with the SecYEG preprotein conducting channel. Has a central role in coupling the hydrolysis of ATP to the transfer of proteins into and across the cell membrane, serving as an ATP-driven molecular motor driving the stepwise translocation of polypeptide chains across the membrane. The protein is Protein translocase subunit SecA of Hydrogenobaculum sp. (strain Y04AAS1).